The primary structure comprises 892 residues: Zinc finger protein 473 homolog (892 aa).

A KRAB domain is found at 23 to 101 (ETLKDLAMDF…TKSSPLQSGF (79 aa)). Polar residues-rich tracts occupy residues 66–76 (DTSQPSLTSQP) and 84–97 (ATST…SSPL). Disordered regions lie at residues 66–97 (DTSQ…SSPL) and 134–203 (GDPE…DSVQ). Basic and acidic residues-rich tracts occupy residues 138-156 (SLPR…HQSP) and 190-203 (KESR…DSVQ). C2H2-type zinc fingers lie at residues 209-231 (YKCS…WVLH) and 265-287 (YTCQ…QKIH). The segment covering 297-308 (SDSNLEGLSRSP) has biased composition (polar residues). Positions 297–370 (SDSNLEGLSR…HPKPLRHQKT (74 aa)) are disordered. Composition is skewed to basic and acidic residues over residues 313–323 (GKQRLSKDTDS) and 332–353 (QDQE…ESQP). 8 C2H2-type zinc fingers span residues 377 to 399 (FRCK…QRAH), 404 to 426 (YKCA…RKSH), 432 to 454 (CECQ…QAIH), 460 to 482 (YKCD…QRIH), 488 to 510 (HKCS…QRVH), 516 to 538 (HQCP…RLRH), 544 to 566 (FGCA…NKIH), and 572 to 594 (YECK…LSIH). Lysine 476 participates in a covalent cross-link: Glycyl lysine isopeptide (Lys-Gly) (interchain with G-Cter in SUMO2). A Glycyl lysine isopeptide (Lys-Gly) (interchain with G-Cter in SUMO2) cross-link involves residue lysine 602. The segment at 697–719 (FKCDIYNRAFKQRAHLSKHQLIH) adopts a C2H2-type 11; degenerate zinc-finger fold. 6 C2H2-type zinc fingers span residues 725 to 747 (FKCN…QKTH), 753 to 775 (FECS…QKIH), 781 to 803 (FKCG…QRIH), 809 to 831 (YVCQ…LRIH), 837 to 859 (YTCG…ERIH), and 865 to 887 (YACG…QRIH).

This sequence belongs to the krueppel C2H2-type zinc-finger protein family. As to quaternary structure, interacts with the SLBP/pre-mRNA complex but not with SLBP alone. Interacts with LSM11 in a U7 snRNP-dependent manner.

The protein localises to the nucleus. Functionally, involved in histone 3'-end pre-mRNA processing by associating with U7 snRNP and interacting with SLBP/pre-mRNA complex. Increases histone 3'-end pre-mRNA processing but has no effect on U7 snRNP levels, when overexpressed. Required for cell cycle progression from G1 to S phases. In Mus musculus (Mouse), this protein is Zinc finger protein 473 homolog (Znf473).